A 304-amino-acid chain; its full sequence is Acetaldehyde dehydrogenase 1 (304 aa).

Cys-131 serves as the catalytic Acyl-thioester intermediate. Residues 162–170 (SAGPGTRKN) and Asn-273 each bind NAD(+).

It belongs to the acetaldehyde dehydrogenase family.

The enzyme catalyses acetaldehyde + NAD(+) + CoA = acetyl-CoA + NADH + H(+). The sequence is that of Acetaldehyde dehydrogenase 1 from Dechloromonas aromatica (strain RCB).